We begin with the raw amino-acid sequence, 371 residues long: Putative RNA-binding protein Luc7-like 1 (371 aa).

2 coiled-coil regions span residues 87-177 and 218-259; these read MDHL…RNSM and FIQI…LSRR. A compositionally biased stretch (basic and acidic residues) spans 232 to 257; that stretch reads VAEKQEKRNQDRLRRREEREREERLS. The tract at residues 232 to 371 is disordered; it reads VAEKQEKRNQ…RSEEKEAGEI (140 aa). Residues 258–317 are compositionally biased toward basic residues; sequence RRSGSRTRDRRRSRSRDRRRRRSRSTSRERRKLSRSRSRDRHRRHRSRSRSHSRGHRRAS. Composition is skewed to basic and acidic residues over residues 318–351 and 361–371; these read RDRS…DWRL and RRSEEKEAGEI. Phosphoserine occurs at positions 332, 336, and 363.

Belongs to the Luc7 family. In terms of tissue distribution, ubiquitous.

Its function is as follows. May bind to RNA via its Arg/Ser-rich domain. In Homo sapiens (Human), this protein is Putative RNA-binding protein Luc7-like 1 (LUC7L).